We begin with the raw amino-acid sequence, 113 residues long: Large ribosomal subunit protein uL22 (113 aa).

Belongs to the universal ribosomal protein uL22 family. As to quaternary structure, part of the 50S ribosomal subunit.

In terms of biological role, this protein binds specifically to 23S rRNA; its binding is stimulated by other ribosomal proteins, e.g. L4, L17, and L20. It is important during the early stages of 50S assembly. It makes multiple contacts with different domains of the 23S rRNA in the assembled 50S subunit and ribosome. The globular domain of the protein is located near the polypeptide exit tunnel on the outside of the subunit, while an extended beta-hairpin is found that lines the wall of the exit tunnel in the center of the 70S ribosome. The protein is Large ribosomal subunit protein uL22 of Halalkalibacterium halodurans (strain ATCC BAA-125 / DSM 18197 / FERM 7344 / JCM 9153 / C-125) (Bacillus halodurans).